Here is a 586-residue protein sequence, read N- to C-terminus: Actin-related protein 9 (586 aa).

The tract at residues serine 141 to asparagine 169 is disordered.

Belongs to the actin family. ARP8 subfamily.

The polypeptide is Actin-related protein 9 (ARP9) (Oryza sativa subsp. japonica (Rice)).